The chain runs to 206 residues: Small ribosomal subunit protein uS4 (206 aa).

The disordered stretch occupies residues 18–45 (NIWGRPKSPVNRREYGPGQHGQRRKGKM). The S4 RNA-binding domain occupies 94–157 (RRLDAVVYRA…KQLASVLEAV (64 aa)).

This sequence belongs to the universal ribosomal protein uS4 family. In terms of assembly, part of the 30S ribosomal subunit. Contacts protein S5. The interaction surface between S4 and S5 is involved in control of translational fidelity.

Functionally, one of the primary rRNA binding proteins, it binds directly to 16S rRNA where it nucleates assembly of the body of the 30S subunit. With S5 and S12 plays an important role in translational accuracy. The chain is Small ribosomal subunit protein uS4 from Ruegeria pomeroyi (strain ATCC 700808 / DSM 15171 / DSS-3) (Silicibacter pomeroyi).